Here is a 438-residue protein sequence, read N- to C-terminus: Mannan endo-1,4-beta-mannosidase F (438 aa).

Positions 1–17 (MHPLPSVALLSAIGAVA) are cleaved as a signal peptide. The CBM1 domain maps to 19-54 (QVGPWGQCGGRSYTGETSCVSGWSCVLFNEWYSQCQ). The tract at residues 60-96 (STSSVSATAAPSSTSSSKESVPSATTSKKPVPTGSSS) is ser-rich linker. Low complexity predominate over residues 61-86 (TSSVSATAAPSSTSSSKESVPSATTS). The segment at 61 to 92 (TSSVSATAAPSSTSSSKESVPSATTSKKPVPT) is disordered. Residues 97-438 (FVKADGLKFN…CGVADHLSTL (342 aa)) are catalytic. Substrate-binding residues include W149 and N263. E264 (proton donor) is an active-site residue. A glycan (N-linked (GlcNAc...) asparagine) is linked at N277. Y339 contacts substrate. E373 acts as the Nucleophile in catalysis. W402 is a substrate binding site.

It belongs to the glycosyl hydrolase 5 (cellulase A) family.

Its subcellular location is the secreted. The enzyme catalyses Random hydrolysis of (1-&gt;4)-beta-D-mannosidic linkages in mannans, galactomannans and glucomannans.. Functionally, endo-1,4-mannanase, a crucial enzyme for depolymerization of seed galactomannans and wood galactoglucomannans. This Aspergillus fumigatus (strain ATCC MYA-4609 / CBS 101355 / FGSC A1100 / Af293) (Neosartorya fumigata) protein is Mannan endo-1,4-beta-mannosidase F (manF).